The chain runs to 468 residues: Glutamate--tRNA ligase (468 aa).

The 'HIGH' region signature appears at 8–18 (PSPTGDPHVGT). Positions 243-247 (KISKR) match the 'KMSKS' region motif. An ATP-binding site is contributed by Lys-246.

Belongs to the class-I aminoacyl-tRNA synthetase family. Glutamate--tRNA ligase type 1 subfamily. In terms of assembly, monomer.

It localises to the cytoplasm. It catalyses the reaction tRNA(Glu) + L-glutamate + ATP = L-glutamyl-tRNA(Glu) + AMP + diphosphate. Functionally, catalyzes the attachment of glutamate to tRNA(Glu) in a two-step reaction: glutamate is first activated by ATP to form Glu-AMP and then transferred to the acceptor end of tRNA(Glu). The protein is Glutamate--tRNA ligase of Thermus thermophilus (strain ATCC BAA-163 / DSM 7039 / HB27).